A 172-amino-acid polypeptide reads, in one-letter code: Photosystem I assembly protein Ycf3 (172 aa).

3 TPR repeats span residues A35–P70, S74–L107, and G122–N155.

Belongs to the Ycf3 family.

It is found in the plastid. The protein resides in the chloroplast thylakoid membrane. Its function is as follows. Essential for the assembly of the photosystem I (PSI) complex. May act as a chaperone-like factor to guide the assembly of the PSI subunits. This Sorghum bicolor (Sorghum) protein is Photosystem I assembly protein Ycf3.